A 1192-amino-acid polypeptide reads, in one-letter code: Chromosome partition protein Smc (1192 aa).

31-38 lines the ATP pocket; it reads PNGSGKSN. 4 coiled-coil regions span residues 164-197, 234-292, 333-369, and 396-464; these read AGISRFKAKKVEAERRLERVQTNLTRLGDIVDEV, LTLS…RSEL, SAIADLRKTIAALEVAEAELADVQQKKESIAAKRDVE, and EHEA…DAKV. The 115-residue stretch at 522-636 folds into the SMC hinge domain; that stretch reads KDLVGIVADC…LVDTLATAIG (115 aa). 3 coiled-coil regions span residues 676 to 736, 772 to 902, and 986 to 1030; these read RSEL…AKLH, ELAV…EREA, and GSVN…INAD.

Belongs to the SMC family. As to quaternary structure, homodimer.

It localises to the cytoplasm. Required for chromosome condensation and partitioning. This Rhodopirellula baltica (strain DSM 10527 / NCIMB 13988 / SH1) protein is Chromosome partition protein Smc.